We begin with the raw amino-acid sequence, 657 residues long: MYPPPPAPAPHRDFISVTLSLGESYDNSKSRRRRSCWRKWKQLSRLQRNVILFVLGFLILCGFLYSLQVSDQWKALSGSRAEVEKMKLEVLPVLPAPQKESAEPEGFADILSQKRQRHLRRGPPHLQIRPPNTVSKDGMQDDAKEREAALGKAQQEENTQRTVISWRGAVIEPEQATEPPSKRAEASIKPLFLASRIWKEPAPPNERQKGVIEAFLHAWKGYQKFAWGHDELKPVSKTFSEWFGLGLTLIDALDTMWILGLKQEFKEARKWVSENLDFQKNVDVNLFESTIRILGGLLSAYHLSGDSLFLSKAEDFGNRLMPAFTTPSKIPYSDVNIGTGFAHSPQWTSDSTVAEVTSIQLEFRELSRLTGIKKFQEAVEEVTKHIHSLSGKKDGLVPMFINTNSGLFTHPGVFTLGARADSYYEYLLKQWIQGGKKETQLLEDYVRAIEGIKAHLLRQSQPRKLTFVGELAHGRFSAKMDHLVCFLPGTLALGVHHGLPADHMDLARALMETCYQMNQQMETGLSPEIAHFNMYPRADHKDVEVKPADRHNLLRPETVESLFYLYRVTKDRKYQDWGWEILQSFNKYTRVPSGGYSSINNVQNSHKPEPRDKMESFFVGETLKYLYLLFSDDLELLGLDTCVFNTEAHPLPIWSPA.

Over 1-49 (MYPPPPAPAPHRDFISVTLSLGESYDNSKSRRRRSCWRKWKQLSRLQRN) the chain is Cytoplasmic. A helical membrane pass occupies residues 50–70 (VILFVLGFLILCGFLYSLQVS). Over 71–657 (DQWKALSGSR…AHPLPIWSPA (587 aa)) the chain is Lumenal. The residue at position 101 (serine 101) is a Phosphoserine. Residues 118-157 (HLRRGPPHLQIRPPNTVSKDGMQDDAKEREAALGKAQQEE) are disordered. Positions 138-157 (GMQDDAKEREAALGKAQQEE) are enriched in basic and acidic residues. The active-site Proton donor is glutamate 288. The active site involves aspartate 421. A disulfide bridge connects residues cysteine 485 and cysteine 514. Residue glutamate 528 is the Proton donor of the active site. The active site involves glutamate 557. Threonine 646 provides a ligand contact to Ca(2+).

The protein belongs to the glycosyl hydrolase 47 family. The cofactor is Ca(2+).

The protein localises to the endoplasmic reticulum membrane. It carries out the reaction N(4)-(alpha-D-Man-(1-&gt;2)-alpha-D-Man-(1-&gt;2)-alpha-D-Man-(1-&gt;3)-[alpha-D-Man-(1-&gt;2)-alpha-D-Man-(1-&gt;3)-[alpha-D-Man-(1-&gt;2)-alpha-D-Man-(1-&gt;6)]-alpha-D-Man-(1-&gt;6)]-beta-D-Man-(1-&gt;4)-beta-D-GlcNAc-(1-&gt;4)-beta-D-GlcNAc)-L-asparaginyl-[protein] (N-glucan mannose isomer 9A1,2,3B1,2,3) + 4 H2O = N(4)-(alpha-D-Man-(1-&gt;3)-[alpha-D-Man-(1-&gt;3)-[alpha-D-Man-(1-&gt;6)]-alpha-D-Man-(1-&gt;6)]-beta-D-Man-(1-&gt;4)-beta-D-GlcNAc-(1-&gt;4)-beta-D-GlcNAc)-L-asparaginyl-[protein] (N-glucan mannose isomer 5A1,2) + 4 beta-D-mannose. It catalyses the reaction N(4)-(alpha-D-Man-(1-&gt;2)-alpha-D-Man-(1-&gt;2)-alpha-D-Man-(1-&gt;3)-[alpha-D-Man-(1-&gt;3)-[alpha-D-Man-(1-&gt;2)-alpha-D-Man-(1-&gt;6)]-alpha-D-Man-(1-&gt;6)]-beta-D-Man-(1-&gt;4)-beta-D-GlcNAc-(1-&gt;4)-beta-D-GlcNAc)-L-asparaginyl-[protein] (N-glucan mannose isomer 8A1,2,3B1,3) + 3 H2O = N(4)-(alpha-D-Man-(1-&gt;3)-[alpha-D-Man-(1-&gt;3)-[alpha-D-Man-(1-&gt;6)]-alpha-D-Man-(1-&gt;6)]-beta-D-Man-(1-&gt;4)-beta-D-GlcNAc-(1-&gt;4)-beta-D-GlcNAc)-L-asparaginyl-[protein] (N-glucan mannose isomer 5A1,2) + 3 beta-D-mannose. The protein operates within protein modification; protein glycosylation. In terms of biological role, involved in glycoprotein quality control targeting of misfolded glycoproteins for degradation. It primarily trims a single alpha-1,2-linked mannose residue from Man(9)GlcNAc(2) to produce Man(8)GlcNAc(2), but at high enzyme concentrations, as found in the ER quality control compartment (ERQC), it further trims the carbohydrates to Man(5-6)GlcNAc(2). This is Endoplasmic reticulum mannosyl-oligosaccharide 1,2-alpha-mannosidase (Man1b1) from Rattus norvegicus (Rat).